Here is a 103-residue protein sequence, read N- to C-terminus: Small ribosomal subunit protein uS10 (103 aa).

The protein belongs to the universal ribosomal protein uS10 family. In terms of assembly, part of the 30S ribosomal subunit.

In terms of biological role, involved in the binding of tRNA to the ribosomes. The protein is Small ribosomal subunit protein uS10 of Campylobacter jejuni subsp. jejuni serotype O:6 (strain 81116 / NCTC 11828).